Consider the following 329-residue polypeptide: D-alanine--D-alanine ligase (329 aa).

In terms of domain architecture, ATP-grasp spans 120-326 (KLWYDALDIP…FHEFLEDCIN (207 aa)). 150–205 (AFEKWGKVFVKAARQGSSVGCYSVAEKQAIAKAVNDAFGYSDQVLVEKAVKPRELE) serves as a coordination point for ATP. Positions 280, 293, and 295 each coordinate Mg(2+).

The protein belongs to the D-alanine--D-alanine ligase family. It depends on Mg(2+) as a cofactor. Requires Mn(2+) as cofactor.

The protein resides in the cytoplasm. It carries out the reaction 2 D-alanine + ATP = D-alanyl-D-alanine + ADP + phosphate + H(+). Its pathway is cell wall biogenesis; peptidoglycan biosynthesis. Its function is as follows. Cell wall formation. The protein is D-alanine--D-alanine ligase of Vibrio parahaemolyticus serotype O3:K6 (strain RIMD 2210633).